Consider the following 176-residue polypeptide: NAD(P)H-quinone oxidoreductase subunit 6, chloroplastic (176 aa).

Transmembrane regions (helical) follow at residues 10 to 30 (ILLV…VLFT), 32 to 52 (PIFS…FHIL), 61 to 81 (AQLL…VMFM), 92 to 112 (LWTV…FSLI), and 152 to 172 (FYLP…GAIA).

The protein belongs to the complex I subunit 6 family. NDH is composed of at least 16 different subunits, 5 of which are encoded in the nucleus.

It is found in the plastid. The protein localises to the chloroplast thylakoid membrane. The enzyme catalyses a plastoquinone + NADH + (n+1) H(+)(in) = a plastoquinol + NAD(+) + n H(+)(out). It carries out the reaction a plastoquinone + NADPH + (n+1) H(+)(in) = a plastoquinol + NADP(+) + n H(+)(out). NDH shuttles electrons from NAD(P)H:plastoquinone, via FMN and iron-sulfur (Fe-S) centers, to quinones in the photosynthetic chain and possibly in a chloroplast respiratory chain. The immediate electron acceptor for the enzyme in this species is believed to be plastoquinone. Couples the redox reaction to proton translocation, and thus conserves the redox energy in a proton gradient. The polypeptide is NAD(P)H-quinone oxidoreductase subunit 6, chloroplastic (ndhG) (Drimys granadensis).